Consider the following 781-residue polypeptide: Protein translocase subunit SecA 2 (781 aa).

Residues Q85, 103 to 107 (GEGKT), and D491 contribute to the ATP site.

The protein belongs to the SecA family. Monomer and homodimer. Part of the essential Sec protein translocation apparatus which comprises SecA, SecYEG and auxiliary proteins SecDF. Other proteins may also be involved.

The protein localises to the cell membrane. It is found in the cytoplasm. It carries out the reaction ATP + H2O + cellular proteinSide 1 = ADP + phosphate + cellular proteinSide 2.. Functionally, part of the Sec protein translocase complex. Interacts with the SecYEG preprotein conducting channel. Has a central role in coupling the hydrolysis of ATP to the transfer of proteins into and across the cell membrane, serving as an ATP-driven molecular motor driving the stepwise translocation of polypeptide chains across the membrane. The protein is Protein translocase subunit SecA 2 of Clostridioides difficile (strain 630) (Peptoclostridium difficile).